Reading from the N-terminus, the 694-residue chain is MHKDTKLLDEIKNIKSKLKSGKPAVAPKPTPKQIKAWEETHKSHLNLDTKNSSISVPPPMPDHVLLQTSKTLSVSTLPNIKFNTINQAKFLKAIEDYDLDKIKELISSNTIKIDSFGKRGKLGKTPLQYAIINDKPELAKLLIDAGANINVKTQNGRNLFELAMYNSASDQTFELLLKTNININSMDLRALSRLHNKLFSILLKPANDINTTIGKFNRTLLHQAAERNNIKKAQISINHNINVEAQDITGETALHMLKTSKMAKILLKAGSNTEAQNKLGRTPLHNAILQANKRQVNIKNIHNIVLKLIKSGANPNAVDYYGFTPLEYAIRINDSKIFKLLIKNNAKFKKNRYELFCQALESGNLTATKYLFKKEFLNNINDKNGQNYLYYIATGGNKEVLEYLVKKNHDNGKKILTQFVDKQRNTPIHIAAQNGQFEIIKNFQKLGFDINARNADGETVLHILARAQNGEMIKELIKLGADINIKNKIGKTALDKVEEDFKGISKKISNKQLQELFEESNIIARTGRIEDETKYLYQYRQDGYYKNIEREGNRGRSATLLVPEVNISLFFTGIGLLYNANDSTIRHFMPHDFWTDNARRTEDFFNMRLDNKKFVQTHSKEKFLKTYKNFLKDNPQKDYNEIIANLYPKGLIGIALQNDDLEHKLYALEAKYYVSEKYNMDLPMTIVKNKKLIP.

10 ANK repeats span residues 122–151 (LGKT…NINV), 155–185 (NGRN…NINS), 216–245 (FNRT…NVEA), 249–275 (TGET…NTEA), 279–317 (LGRT…NPNA), 321–350 (YGFT…KFKK), 351–382 (NRYE…NIND), 384–413 (NGQN…DNGK), 423–452 (QRNT…DINA), and 456–485 (DGET…DINI).

The sequence is that of Putative ankyrin repeat protein RBE_0921 from Rickettsia bellii (strain RML369-C).